The chain runs to 143 residues: Large ribosomal subunit protein uL16 (143 aa).

This sequence belongs to the universal ribosomal protein uL16 family. Part of the 50S ribosomal subunit.

Its function is as follows. Binds 23S rRNA and is also seen to make contacts with the A and possibly P site tRNAs. The protein is Large ribosomal subunit protein uL16 of Oenococcus oeni (strain ATCC BAA-331 / PSU-1).